Here is a 39-residue protein sequence, read N- to C-terminus: L-amino-acid oxidase (39 aa).

It belongs to the flavin monoamine oxidase family. FIG1 subfamily. In terms of assembly, monomer. This is in contrast with most of its orthologs, that are non-covalently linked homodimers. It depends on FAD as a cofactor. In terms of processing, N-glycosylated. In terms of tissue distribution, expressed by the venom gland.

Its subcellular location is the secreted. The enzyme catalyses an L-alpha-amino acid + O2 + H2O = a 2-oxocarboxylate + H2O2 + NH4(+). The catalysed reaction is L-leucine + O2 + H2O = 4-methyl-2-oxopentanoate + H2O2 + NH4(+). In terms of biological role, catalyzes an oxidative deamination of predominantly hydrophobic and aromatic L-amino acids, thus producing hydrogen peroxide that may contribute to the diverse toxic effects of this enzyme. Shows activity on L-Leu. Exhibits diverse biological activities, such as hemorrhage, hemolysis, edema, apoptosis of vascular endothelial cells or tumor cell lines, and antiparasitic activities, as well as regulation of platelet aggregation. Effects of snake L-amino oxidases on platelets are controversial, since they either induce aggregation or inhibit agonist-induced aggregation. These different effects are probably due to different experimental conditions. In addition, this protein inhibits dose-dependently the growth of Gram-positive, Gram-negative bacteria and yeast, probably by the generation of hydrogen peroxide. In Bothrops marajoensis (Marajo lancehead), this protein is L-amino-acid oxidase.